Here is a 392-residue protein sequence, read N- to C-terminus: tRNA-specific 2-thiouridylase MnmA (392 aa).

ATP is bound by residues 18 to 25 (AMSGGVDS) and Leu-44. The active-site Nucleophile is Cys-112. Cys-112 and Cys-208 are oxidised to a cystine. Gly-136 is a binding site for ATP. Positions 158–160 (RDQ) are interaction with tRNA. Cys-208 acts as the Cysteine persulfide intermediate in catalysis.

This sequence belongs to the MnmA/TRMU family.

Its subcellular location is the cytoplasm. The catalysed reaction is S-sulfanyl-L-cysteinyl-[protein] + uridine(34) in tRNA + AH2 + ATP = 2-thiouridine(34) in tRNA + L-cysteinyl-[protein] + A + AMP + diphosphate + H(+). In terms of biological role, catalyzes the 2-thiolation of uridine at the wobble position (U34) of tRNA, leading to the formation of s(2)U34. In Rhodospirillum centenum (strain ATCC 51521 / SW), this protein is tRNA-specific 2-thiouridylase MnmA.